Here is a 471-residue protein sequence, read N- to C-terminus: Tetratricopeptide repeat protein 29 (471 aa).

TPR repeat units lie at residues 92-131 (DKLPEAAKAQSLFWQQRPLEDQPDKLDNFYHYLTRAEAAE), 136-173 (YEEVYNNLYALACYFDNSEDKWVRNHFYERCFNIAQLI), 182-215 (AEAESHMGLLFEEEGELLKAAEHYEAFHELTHGR), 234-267 (VRTYRLLSDRMLENKDYKQAIKILIKASEIAREG), 274-307 (GEASYYLGLAHLASGEYETALTVLNRYSEISTSL), 314-347 (GRAYEAIAKALQSQGETTEAINYLEKFVTIARNN), and 354-387 (IRACTMLGDIYNEKGQYSKASEYFQQAFSTAMEL). Residues 449–471 (ATEDNIYQLPDAEEETRRSPENQ) form a disordered region.

Expressed in spermatozoa (at protein level).

It is found in the cytoplasm. The protein resides in the cytoskeleton. Its subcellular location is the flagellum axoneme. Its function is as follows. Axonemal protein which is implicated in axonemal and/or peri-axonemal structure assembly and regulates flagellum assembly and beating and therefore sperm motility. This is Tetratricopeptide repeat protein 29 (Ttc29) from Mus musculus (Mouse).